The sequence spans 383 residues: S-adenosylmethionine synthase (383 aa).

An ATP-binding site is contributed by His-15. Asp-17 lines the Mg(2+) pocket. A K(+)-binding site is contributed by Glu-43. 2 residues coordinate L-methionine: Glu-56 and Gln-99. Residues 99–109 are flexible loop; the sequence is QSPDINQGVDK. ATP is bound by residues 164 to 166, 230 to 231, Asp-239, 245 to 246, Ala-262, and Lys-266; these read DAK, RF, and RK. Asp-239 contributes to the L-methionine binding site. Lys-270 is a binding site for L-methionine.

The protein belongs to the AdoMet synthase family. Homotetramer; dimer of dimers. The cofactor is Mg(2+). K(+) is required as a cofactor.

The protein resides in the cytoplasm. The catalysed reaction is L-methionine + ATP + H2O = S-adenosyl-L-methionine + phosphate + diphosphate. It functions in the pathway amino-acid biosynthesis; S-adenosyl-L-methionine biosynthesis; S-adenosyl-L-methionine from L-methionine: step 1/1. Catalyzes the formation of S-adenosylmethionine (AdoMet) from methionine and ATP. The overall synthetic reaction is composed of two sequential steps, AdoMet formation and the subsequent tripolyphosphate hydrolysis which occurs prior to release of AdoMet from the enzyme. This Vibrio atlanticus (strain LGP32) (Vibrio splendidus (strain Mel32)) protein is S-adenosylmethionine synthase.